The chain runs to 170 residues: Lipoprotein signal peptidase (170 aa).

3 helical membrane-spanning segments follow: residues 5–25 (IVGV…KAYA), 62–82 (SNLI…VLFV), and 89–111 (STIC…LRFG). Residues Asp-115 and Asp-133 contribute to the active site. Residues 126 to 146 (WPAFNFADVCVTCGVICFLCL) form a helical membrane-spanning segment.

It belongs to the peptidase A8 family.

It is found in the cell inner membrane. The enzyme catalyses Release of signal peptides from bacterial membrane prolipoproteins. Hydrolyzes -Xaa-Yaa-Zaa-|-(S,diacylglyceryl)Cys-, in which Xaa is hydrophobic (preferably Leu), and Yaa (Ala or Ser) and Zaa (Gly or Ala) have small, neutral side chains.. It functions in the pathway protein modification; lipoprotein biosynthesis (signal peptide cleavage). Its function is as follows. This protein specifically catalyzes the removal of signal peptides from prolipoproteins. The chain is Lipoprotein signal peptidase from Anaplasma marginale (strain Florida).